Consider the following 499-residue polypeptide: MKKKYILAIDQGTTSSRAILFDQKGHIAGMAQREFTQIFPQPGWVEHNPRDIMTSVYTTITELLNNTQIDVRAIAGIGITNQRETTVIWDRQTGQPIYNAIVWQSRQTKDICDQLTTAGYQDLVHAKTGLLIDAYFSGTKVKWILDHVENAHTQATRGELAFGTIDTWIIWNLTGGQVHVTDYSNASRTLLYDIHALRWDPDLLTMLDIPAAILPDVRSSSDIYGLTQTPYFHGEQIPIAGIAGDQQAALFGQACFEPGMAKNTYGTGCFMLMHTGKKAVESKNGLLTTIAWGLNGEIEYALEGSIFVAGSVVQWLRDGLRMFGKASDSQAYADRVSDNGGVYVVPAFVGLGAPYWRSDVRGAVFGLTRSTTKEHFIRAALESMAYQTRDVLSAMQADAGMELKELRTDGAAITNDFMAQFQSDILAVPVLRSEIAETTALGAAYLAGLATGFWSSREEITQHWAINLCFKPQMDKQQREHLYAGWKQAVAATLGFRVA.

Residue Thr13 participates in ADP binding. 3 residues coordinate ATP: Thr13, Thr14, and Ser15. Sn-glycerol 3-phosphate is bound at residue Thr13. Arg17 is a binding site for ADP. Sn-glycerol 3-phosphate-binding residues include Arg83, Glu84, Tyr135, and Asp245. Positions 83, 84, 135, 245, and 246 each coordinate glycerol. The ADP site is built by Thr267 and Gly310. Residues Thr267, Gly310, Gln314, and Ala411 each coordinate ATP. Residues Ala411 and Asn415 each contribute to the ADP site.

This sequence belongs to the FGGY kinase family.

The catalysed reaction is glycerol + ATP = sn-glycerol 3-phosphate + ADP + H(+). The protein operates within polyol metabolism; glycerol degradation via glycerol kinase pathway; sn-glycerol 3-phosphate from glycerol: step 1/1. Its activity is regulated as follows. Inhibited by fructose 1,6-bisphosphate (FBP). Its function is as follows. Key enzyme in the regulation of glycerol uptake and metabolism. Catalyzes the phosphorylation of glycerol to yield sn-glycerol 3-phosphate. The sequence is that of Glycerol kinase from Xylella fastidiosa (strain 9a5c).